Reading from the N-terminus, the 430-residue chain is Agropine synthesis reductase (430 aa).

203–227 serves as a coordination point for NAD(+); it reads LISGPSRGIGKAIAENLIAHGYRMS. Ser-333 provides a ligand contact to substrate. Catalysis depends on Tyr-346, which acts as the Proton acceptor.

It belongs to the short-chain dehydrogenases/reductases (SDR) family.

Its pathway is opine metabolism; mannopine biosynthesis. Reduces deoxy-fructosyl-glutamine to mannopine. The chain is Agropine synthesis reductase (mas1) from Rhizobium rhizogenes (Agrobacterium rhizogenes).